Here is a 1662-residue protein sequence, read N- to C-terminus: ABC transporter A family member 5 (1662 aa).

7 helical membrane-spanning segments follow: residues 30–50 (IVFP…VQLF), 242–262 (SVFV…ELVV), 284–304 (ISWI…IIVI), 317–337 (IIVI…AFIF), 346–366 (FAGL…IFIG), 377–397 (LLLC…IMSI), and 417–437 (QIIG…WYLD). In terms of domain architecture, ABC transporter 1 spans 505–739 (ISIRNLRKEF…YGVGYLLTCS (235 aa)). Position 541-548 (541-548 (GPNGSGKS)) interacts with ATP. The next 7 membrane-spanning stretches (helical) occupy residues 872 to 892 (FKAF…SIIV), 1052 to 1072 (IVYF…SFAG), 1102 to 1122 (LWDY…LAIV), 1130 to 1150 (FGLF…LSYL), 1163 to 1183 (GAIT…MIIL), 1201 to 1221 (IIDI…VIFI), and 1246 to 1266 (STPI…ILLI). Residues 1322–1557 (LQYKGLHKLF…FGAGYSVEVK (236 aa)) form the ABC transporter 2 domain. 1360–1367 (GLNGAGKT) is an ATP binding site.

This sequence belongs to the ABC transporter superfamily. ABCA family.

Its subcellular location is the membrane. This chain is ABC transporter A family member 5 (abcA5), found in Dictyostelium discoideum (Social amoeba).